The following is a 363-amino-acid chain: S-adenosylmethionine:tRNA ribosyltransferase-isomerase (363 aa).

Belongs to the QueA family. In terms of assembly, monomer.

The protein localises to the cytoplasm. The catalysed reaction is 7-aminomethyl-7-carbaguanosine(34) in tRNA + S-adenosyl-L-methionine = epoxyqueuosine(34) in tRNA + adenine + L-methionine + 2 H(+). It participates in tRNA modification; tRNA-queuosine biosynthesis. In terms of biological role, transfers and isomerizes the ribose moiety from AdoMet to the 7-aminomethyl group of 7-deazaguanine (preQ1-tRNA) to give epoxyqueuosine (oQ-tRNA). This Haemophilus influenzae (strain ATCC 51907 / DSM 11121 / KW20 / Rd) protein is S-adenosylmethionine:tRNA ribosyltransferase-isomerase.